A 388-amino-acid polypeptide reads, in one-letter code: GTPase Obg (388 aa).

The Obg domain maps to 4–162; the sequence is SNFVDYVKIY…MTVILELKLL (159 aa). Residues 18 to 45 form a disordered region; the sequence is KGGRGSTHMRREKYTPNGGPDGGDGGRG. Over residues 36–45 the composition is skewed to gly residues; it reads GPDGGDGGRG. Residues 163 to 329 enclose the OBG-type G domain; sequence ADVGLVGFPN…LKDILWTELN (167 aa). Residues 169-176, 194-198, 216-219, 283-286, and 310-312 each bind GTP; these read GFPNAGKS, FTTLE, DIPG, TKSD, and SSV. 2 residues coordinate Mg(2+): serine 176 and threonine 196. The segment at 352-388 is disordered; sequence LKDMGEDEELDYEYEDDGDGDEDDLDYEYEEEDWEDK. Acidic residues predominate over residues 356-388; the sequence is GEDEELDYEYEDDGDGDEDDLDYEYEEEDWEDK.

This sequence belongs to the TRAFAC class OBG-HflX-like GTPase superfamily. OBG GTPase family. As to quaternary structure, monomer. Requires Mg(2+) as cofactor.

It localises to the cytoplasm. Functionally, an essential GTPase which binds GTP, GDP and possibly (p)ppGpp with moderate affinity, with high nucleotide exchange rates and a fairly low GTP hydrolysis rate. Plays a role in control of the cell cycle, stress response, ribosome biogenesis and in those bacteria that undergo differentiation, in morphogenesis control. This Bacteroides fragilis (strain ATCC 25285 / DSM 2151 / CCUG 4856 / JCM 11019 / LMG 10263 / NCTC 9343 / Onslow / VPI 2553 / EN-2) protein is GTPase Obg.